The primary structure comprises 381 residues: Creatine kinase B-type (381 aa).

At Ser-4 the chain carries Phosphoserine. Residues 11–98 (KLRFPAEDEF…FDPIIEDRHG (88 aa)) form the Phosphagen kinase N-terminal domain. Residue Thr-35 is modified to Phosphothreonine. Residue Lys-45 forms a Glycyl lysine isopeptide (Lys-Gly) (interchain with G-Cter in ubiquitin) linkage. Creatine is bound at residue Val-72. The span at 96-110 (RHGGYKPSDEHKTDL) shows a compositional bias: basic and acidic residues. A disordered region spans residues 96-123 (RHGGYKPSDEHKTDLNPDNLQGGDDLDP). Residues Lys-101 and Lys-107 each participate in a glycyl lysine isopeptide (Lys-Gly) (interchain with G-Cter in ubiquitin) cross-link. At Tyr-125 the chain carries Phosphotyrosine. The region spanning 125–367 (YVLSSRVRTG…KLLIEMEQRL (243 aa)) is the Phosphagen kinase C-terminal domain. ATP contacts are provided by residues 128–132 (SSRVR), Arg-130, Arg-132, and His-191. The tract at residues 130–138 (RVRTGRSIR) is internal MTS-like signal. Ser-199 bears the Phosphoserine mark. Glu-232 provides a ligand contact to creatine. Arg-236 contributes to the ATP binding site. Tyr-269 carries the post-translational modification 3'-nitrotyrosine. Ser-285 is a creatine binding site. ATP is bound at residue Arg-292. Ser-309 is modified (phosphoserine). ATP contacts are provided by residues Arg-320, 320-325 (RGTGGV), and Asp-335. Residue Thr-322 is modified to Phosphothreonine. Lys-381 participates in a covalent cross-link: Glycyl lysine isopeptide (Lys-Gly) (interchain with G-Cter in ubiquitin).

The protein belongs to the ATP:guanido phosphotransferase family. Dimer of identical or non-identical chains, which can be either B (brain type) or M (muscle type). With MM being the major form in skeletal muscle and myocardium, MB existing in myocardium, and BB existing in many tissues, especially brain. Interacts with SLC12A6 (via C-terminus); the interaction may be required for SLC12A6 potassium-chloride cotransport activity. Post-translationally, ubiquitinated by the ECS(ASB9) complex, leading to its degradation by the proteasome.

The protein localises to the cytoplasm. Its subcellular location is the cytosol. It localises to the mitochondrion. It is found in the cell membrane. It carries out the reaction creatine + ATP = N-phosphocreatine + ADP + H(+). In terms of biological role, reversibly catalyzes the transfer of phosphate between ATP and various phosphogens (e.g. creatine phosphate). Creatine kinase isoenzymes play a central role in energy transduction in tissues with large, fluctuating energy demands, such as skeletal muscle, heart, brain and spermatozoa. Acts as a key regulator of adaptive thermogenesis as part of the futile creatine cycle: localizes to the mitochondria of thermogenic fat cells and acts by mediating phosphorylation of creatine to initiate a futile cycle of creatine phosphorylation and dephosphorylation. During the futile creatine cycle, creatine and N-phosphocreatine are in a futile cycle, which dissipates the high energy charge of N-phosphocreatine as heat without performing any mechanical or chemical work. The sequence is that of Creatine kinase B-type (CKB) from Oryctolagus cuniculus (Rabbit).